The sequence spans 434 residues: Probable zinc metalloprotease PTRG_04772 (434 aa).

The N-linked (GlcNAc...) asparagine glycan is linked to N88. The Zn(2+) site is built by H111, D131, and E164. N-linked (GlcNAc...) asparagine glycosylation occurs at N179. D191 is a binding site for Zn(2+). 6 N-linked (GlcNAc...) asparagine glycosylation sites follow: N220, N299, N347, N353, N390, and N395. The Fibronectin type-III domain occupies 340-433 (SPTNVGINTT…LPFPFGCARN (94 aa)).

Belongs to the peptidase M28 family. M28B subfamily. It depends on Zn(2+) as a cofactor.

It localises to the secreted. This Pyrenophora tritici-repentis (strain Pt-1C-BFP) (Wheat tan spot fungus) protein is Probable zinc metalloprotease PTRG_04772.